A 460-amino-acid polypeptide reads, in one-letter code: A-type ATP synthase subunit B (460 aa).

This sequence belongs to the ATPase alpha/beta chains family. As to quaternary structure, has multiple subunits with at least A(3), B(3), C, D, E, F, H, I and proteolipid K(x).

The protein resides in the cell membrane. In terms of biological role, component of the A-type ATP synthase that produces ATP from ADP in the presence of a proton gradient across the membrane. The B chain is a regulatory subunit. The sequence is that of A-type ATP synthase subunit B from Thermofilum pendens (strain DSM 2475 / Hrk 5).